We begin with the raw amino-acid sequence, 177 residues long: Interleukin-1 receptor antagonist protein (177 aa).

The N-terminal stretch at 1 to 25 is a signal peptide; sequence MEIRRRSVRHLISLLLFLFYSETAC. Residues Cys-91 and Cys-141 are joined by a disulfide bond. N-linked (GlcNAc...) asparagine glycosylation is present at Asn-109.

It belongs to the IL-1 family.

Its subcellular location is the secreted. Its function is as follows. Anti-inflammatory antagonist of interleukin-1 family of proinflammatory cytokines such as interleukin-1beta/IL1B and interleukin-1alpha/IL1A. Protects from immune dysregulation and uncontrolled systemic inflammation triggered by IL1 for a range of innate stimulatory agents such as pathogens. In Equus caballus (Horse), this protein is Interleukin-1 receptor antagonist protein (IL1RN).